The chain runs to 690 residues: Elongation factor G (690 aa).

The region spanning 8 to 283 (EDYRNFGIMA…AVVDYLPSPI (276 aa)) is the tr-type G domain. Residues 17-24 (AHIDAGKT), 81-85 (DTPGH), and 135-138 (NKMD) contribute to the GTP site.

The protein belongs to the TRAFAC class translation factor GTPase superfamily. Classic translation factor GTPase family. EF-G/EF-2 subfamily.

The protein resides in the cytoplasm. Functionally, catalyzes the GTP-dependent ribosomal translocation step during translation elongation. During this step, the ribosome changes from the pre-translocational (PRE) to the post-translocational (POST) state as the newly formed A-site-bound peptidyl-tRNA and P-site-bound deacylated tRNA move to the P and E sites, respectively. Catalyzes the coordinated movement of the two tRNA molecules, the mRNA and conformational changes in the ribosome. This Bradyrhizobium diazoefficiens (strain JCM 10833 / BCRC 13528 / IAM 13628 / NBRC 14792 / USDA 110) protein is Elongation factor G.